A 158-amino-acid chain; its full sequence is Pyruvoyl-dependent arginine decarboxylase (158 aa).

Ser44 carries the post-translational modification Pyruvic acid (Ser).

The protein belongs to the PdaD family. It depends on pyruvate as a cofactor.

The enzyme catalyses L-arginine + H(+) = agmatine + CO2. This chain is Pyruvoyl-dependent arginine decarboxylase, found in Pyrococcus abyssi (strain GE5 / Orsay).